Reading from the N-terminus, the 349-residue chain is Lipoyl synthase (349 aa).

7 residues coordinate [4Fe-4S] cluster: Cys-55, Cys-60, Cys-66, Cys-81, Cys-85, Cys-88, and Ser-292. Positions 67–281 (WESREATFLI…ADFARELGFG (215 aa)) constitute a Radical SAM core domain.

The protein belongs to the radical SAM superfamily. Lipoyl synthase family. It depends on [4Fe-4S] cluster as a cofactor.

Its subcellular location is the cytoplasm. The enzyme catalyses [[Fe-S] cluster scaffold protein carrying a second [4Fe-4S](2+) cluster] + N(6)-octanoyl-L-lysyl-[protein] + 2 oxidized [2Fe-2S]-[ferredoxin] + 2 S-adenosyl-L-methionine + 4 H(+) = [[Fe-S] cluster scaffold protein] + N(6)-[(R)-dihydrolipoyl]-L-lysyl-[protein] + 4 Fe(3+) + 2 hydrogen sulfide + 2 5'-deoxyadenosine + 2 L-methionine + 2 reduced [2Fe-2S]-[ferredoxin]. It functions in the pathway protein modification; protein lipoylation via endogenous pathway; protein N(6)-(lipoyl)lysine from octanoyl-[acyl-carrier-protein]: step 2/2. In terms of biological role, catalyzes the radical-mediated insertion of two sulfur atoms into the C-6 and C-8 positions of the octanoyl moiety bound to the lipoyl domains of lipoate-dependent enzymes, thereby converting the octanoylated domains into lipoylated derivatives. The protein is Lipoyl synthase of Corynebacterium diphtheriae (strain ATCC 700971 / NCTC 13129 / Biotype gravis).